The chain runs to 208 residues: Small ribosomal subunit protein uS2 (208 aa).

It belongs to the universal ribosomal protein uS2 family.

The protein is Small ribosomal subunit protein uS2 of Pyrobaculum calidifontis (strain DSM 21063 / JCM 11548 / VA1).